The primary structure comprises 186 residues: Ribosome-recycling factor (186 aa).

It belongs to the RRF family.

It localises to the cytoplasm. Functionally, responsible for the release of ribosomes from messenger RNA at the termination of protein biosynthesis. May increase the efficiency of translation by recycling ribosomes from one round of translation to another. The polypeptide is Ribosome-recycling factor (Burkholderia thailandensis (strain ATCC 700388 / DSM 13276 / CCUG 48851 / CIP 106301 / E264)).